The chain runs to 468 residues: GTPase Der (468 aa).

EngA-type G domains follow at residues 3 to 169 and 199 to 372; these read PVMA…SPPD and IRLA…KAAT. Residues 9-16, 56-60, 119-122, 205-212, 252-256, and 317-320 each bind GTP; these read GRANVGKS, DTGGF, NKAE, GRPNVGKS, DTAGL, and NKWD. Residues 373–457 enclose the KH-like domain; it reads CKMSTPVLTR…PLRIELKTSH (85 aa).

This sequence belongs to the TRAFAC class TrmE-Era-EngA-EngB-Septin-like GTPase superfamily. EngA (Der) GTPase family. As to quaternary structure, associates with the 50S ribosomal subunit.

GTPase that plays an essential role in the late steps of ribosome biogenesis. In Verminephrobacter eiseniae (strain EF01-2), this protein is GTPase Der.